The following is a 1841-amino-acid chain: Sodium channel protein type 4 subunit alpha (1841 aa).

Residues 1 to 131 (MASSSLPTLV…RVAIKVLIHA (131 aa)) are Cytoplasmic-facing. Over residues 32 to 60 (AMEEEARLQRNKQMEIEEPERKPRSDLEA) the composition is skewed to basic and acidic residues. The disordered stretch occupies residues 32-63 (AMEEEARLQRNKQMEIEEPERKPRSDLEAGKN). One copy of the I repeat lies at 113–448 (MLSPFSIVRR…VVAMAYAEQN (336 aa)). The chain crosses the membrane as a helical span at residues 132–150 (LFSMFIMITILTNCVFMTM). The Extracellular segment spans residues 151–157 (SNPPSWS). Residues 158–178 (KDVEYTFTGIYTFESLIKMLA) form a helical membrane-spanning segment. Residues 179–192 (RGFCIDDFTFLRDP) are Cytoplasmic-facing. A helical membrane pass occupies residues 193–210 (WNWLDFSVITMAYVTEFV). The Extracellular segment spans residues 211-216 (DLGNIS). Asparagine 214 carries N-linked (GlcNAc...) asparagine glycosylation. A helical membrane pass occupies residues 217 to 233 (ALRTFRVLRALKTITVI). At 234–252 (PGLKTIVGALIQSVKKLSD) the chain is on the cytoplasmic side. The helical transmembrane segment at 253–272 (VMILTVFCLSVFALVGLQLF) threads the bilayer. The Extracellular segment spans residues 273–385 (MGNLRQKCVR…PNYGYTSYDT (113 aa)). A disulfide bridge links cysteine 280 with cysteine 354. N-linked (GlcNAc...) asparagine glycosylation is found at asparagine 288, asparagine 291, asparagine 297, asparagine 303, asparagine 315, asparagine 327, and asparagine 356. Cysteines 363 and 369 form a disulfide. An intramembrane region (pore-forming) is located at residues 386–410 (FSWAFLALFRLMTQDYWENLFQLTL). Over 411–417 (RAAGKTY) the chain is Extracellular. A helical membrane pass occupies residues 418 to 438 (MIFFVVIIFLGSFYLINLILA). Topologically, residues 439–572 (VVAMAYAEQN…HIILLIVMDP (134 aa)) are cytoplasmic. The interval 484 to 522 (ALEGGEEADGDPTHSKDCNGSLDTSGEKGPPRPSCSAES) is disordered. An II repeat occupies 554–826 (CCAPWVKFKH…QIAIGRIKWG (273 aa)). The chain crosses the membrane as a helical span at residues 573 to 591 (FVDLGITICIVLNTLFMAM). Residues 592-602 (EHYPMTEHFDN) are Extracellular-facing. The helical transmembrane segment at 603-622 (VLSVGNLVFTGIFTAEMVLK) threads the bilayer. The Cytoplasmic segment spans residues 623-636 (LIAMDPYEYFQQGW). Residues 637–656 (NIFDSFIVTLSLVELGLANV) traverse the membrane as a helical segment. Topologically, residues 657–658 (QG) are extracellular. A helical transmembrane segment spans residues 659–676 (LSVLRSFRLLRVFKLAKS). The Cytoplasmic portion of the chain corresponds to 677-692 (WPTLNMLIKIIGNSVG). Residues 693–711 (ALGNLTLVLAIIVFIFAVV) traverse the membrane as a helical segment. Over 712 to 740 (GMQLFGKSYKECVCKIASDCSLPRWHMHD) the chain is Extracellular. Cysteine 725 and cysteine 731 are disulfide-bonded. The pore-forming intramembrane region spans 741-761 (FFHSFLIVFRILCGEWIETMW). Residues 762–772 (DCMEVAGQAMC) are Extracellular-facing. Cysteine 763 and cysteine 772 are joined by a disulfide. A helical transmembrane segment spans residues 773–791 (LTVFLMVMVIGNLVVLNLF). The Cytoplasmic portion of the chain corresponds to 792 to 1026 (LALLLSSFSA…ACFKIVEHNW (235 aa)). 2 disordered regions span residues 854-896 (EPGG…LTDG) and 925-983 (SDLE…EGEL). Basic and acidic residues predominate over residues 867–887 (EDEKKEPPPEDGNKELKDNHI). Acidic residues-rich tracts occupy residues 925–941 (SDLEMPTEEETDTFSEP) and 969–983 (EDPEEQAEENPEGEL). One copy of the III repeat lies at 1007–1320 (RGKMWWTLRR…KKYYNAMKKL (314 aa)). The helical transmembrane segment at 1027 to 1044 (FETFIVFMILLSSGALAF) threads the bilayer. The Extracellular segment spans residues 1045-1057 (EDIYIEQRRVIRT). Residues 1058-1076 (ILEYADKVFTYIFILEMLL) form a helical membrane-spanning segment. At 1077–1090 (KWVAYGFKVYFTNA) the chain is on the cytoplasmic side. Residues 1091-1109 (WCWLDFLIVDVSIISLVAN) traverse the membrane as a helical segment. The Extracellular segment spans residues 1110-1117 (WLGYSELG). The chain crosses the membrane as a helical span at residues 1118-1136 (PIKSLRTLRALRPLRALSR). The Cytoplasmic segment spans residues 1137-1153 (FEGMRVVVNALLGAIPS). The helical transmembrane segment at 1154–1173 (IMNVLLVCLIFWLIFSIMGV) threads the bilayer. Over 1174–1224 (NLFAGKFYYCINTTTSERFDISVVNNKSECESLMYTGQVRWMNVKVNYDNV) the chain is Extracellular. Cysteine 1183 and cysteine 1203 are oxidised to a cystine. Residues asparagine 1185 and asparagine 1199 are each glycosylated (N-linked (GlcNAc...) asparagine). Positions 1225–1246 (GLGYLSLLQVATFKGWMDIMYA) form an intramembrane region, pore-forming. Topologically, residues 1247 to 1263 (AVDSREKEEQPDYEVNL) are extracellular. A helical transmembrane segment spans residues 1264 to 1285 (YMYLYFVIFIIFGSFFTLNLFI). Topologically, residues 1286-1348 (GVIIDNFNQQ…MVYDFVTKQV (63 aa)) are cytoplasmic. The segment at 1304–1306 (IFM) is important for rapid channel inactivation. Residues 1329-1627 (IPRPQNKIQG…WEKFDPDATQ (299 aa)) form an IV repeat. Residues 1349-1366 (FDISIMILICLNMVTMMV) traverse the membrane as a helical segment. Topologically, residues 1367-1377 (ETDDQSQLKVD) are extracellular. A helical transmembrane segment spans residues 1378 to 1396 (ILYNINMVFIIVFTGECVL). At 1397 to 1408 (KMFALRHYYFTI) the chain is on the cytoplasmic side. The helical transmembrane segment at 1409–1426 (GWNIFDFVVVILSIVGLA) threads the bilayer. Residues 1427–1439 (LSDLIQKYFVSPT) lie on the Extracellular side of the membrane. The chain crosses the membrane as a helical span at residues 1440–1456 (LFRVIRLARIGRVLRLI). Residues 1457-1475 (RGAKGIRTLLFALMMSLPA) are Cytoplasmic-facing. A helical transmembrane segment spans residues 1476–1493 (LFNIGLLLFLVMFIYSIF). At 1494–1515 (GMSNFAYVKKESGIDDMFNFET) the chain is on the extracellular side. An intramembrane region (pore-forming) is located at residues 1516 to 1538 (FGNSIICLFEITTSAGWDGLLNP). Residues 1539 to 1568 (ILNSGPPDCDPTLENPGTNIKGDCGNPSIG) lie on the Extracellular side of the membrane. A disulfide bridge links cysteine 1547 with cysteine 1562. The chain crosses the membrane as a helical span at residues 1569 to 1591 (ICFFCSYIIISFLIVVNMYIAII). Residues 1592–1841 (LENFNVATEE…VRPGVKESLV (250 aa)) lie on the Cytoplasmic side of the membrane. The region spanning 1721-1750 (EEVCAIKIQRAYRRHLLQRSVKQASYMYRH) is the IQ domain. Residues 1776–1794 (SEKEDNGVQSQGEKEKDST) show a composition bias toward basic and acidic residues. The segment at 1776 to 1841 (SEKEDNGVQS…VRPGVKESLV (66 aa)) is disordered. The span at 1801–1812 (TEVTAPSSSDTA) shows a compositional bias: polar residues. The span at 1814 to 1826 (TPPPPSPPPPSSP) shows a compositional bias: pro residues.

It belongs to the sodium channel (TC 1.A.1.10) family. Nav1.4/SCN4A subfamily. In terms of assembly, the Nav1.4 voltage-gated sodium channel consists of an ion-conducting alpha subunit SCN4A which is functional on its own and a regulatory beta subunit SCN1B. SCN1B strongly enhances the presence of SCN4A at the cell surface. SCN1B is also required for rapid channel inactivation and recovery after inactivation. It prevents the decrease of channel activity in response to repetitive, high-frequency depolarizations. Interacts with the syntrophins SNTA1, SNTB1 and SNTB2 (via PDZ domain); probably links SCN4A to the actin cytoskeleton and the extracellular matrix via the dystrophin-associated protein complex and regulates its localization in muscle cells. Interacts with TMEM233; probable regulator of the channel. Detected in quadriceps muscle (at protein level). Detected in hind-limb skeletal muscles, but not in heart or brain. Detected at low levels in the myocardium. According to Pubme=26427606 detected also in brain.

Its subcellular location is the cell membrane. The enzyme catalyses Na(+)(in) = Na(+)(out). Its activity is regulated as follows. The channel is inhibited by tetrodotoxin. In terms of biological role, pore-forming subunit of Nav1.4, a voltage-gated sodium (Nav) channel that directly mediates the depolarizing phase of action potentials in excitable membranes. Navs, also called VGSCs (voltage-gated sodium channels) or VDSCs (voltage-dependent sodium channels), operate by switching between closed and open conformations depending on the voltage difference across the membrane. In the open conformation they allow Na(+) ions to selectively pass through the pore, along their electrochemical gradient. The influx of Na+ ions provokes membrane depolarization, initiating the propagation of electrical signals throughout cells and tissues. Highly expressed in skeletal muscles, Nav1.4 generates the action potential crucial for muscle contraction. This Mus musculus (Mouse) protein is Sodium channel protein type 4 subunit alpha.